A 203-amino-acid chain; its full sequence is MARFRGSITKVSRRLGIALSPKAEKYLERRPFAPGQHGQSRKGKISEYALQLREKQKMKYLYGVLENQFRSYYRKAVSQRGVTGDNLVKLLERRFDNVVFRSGFAASRSAARQLVTHGHLTINGKKVNIPSYLLTPGELIEFRQKSKNMGAVTDSLNKAPDARIPSWIQVDKANQKAVFLSVPEREEVQEPFNEQLVVELYSK.

One can recognise an S4 RNA-binding domain in the interval 93-173 (RRFDNVVFRS…IPSWIQVDKA (81 aa)).

Belongs to the universal ribosomal protein uS4 family. Part of the 30S ribosomal subunit. Contacts protein S5. The interaction surface between S4 and S5 is involved in control of translational fidelity.

Its function is as follows. One of the primary rRNA binding proteins, it binds directly to 16S rRNA where it nucleates assembly of the body of the 30S subunit. In terms of biological role, with S5 and S12 plays an important role in translational accuracy. This chain is Small ribosomal subunit protein uS4, found in Chlorobium phaeobacteroides (strain DSM 266 / SMG 266 / 2430).